A 246-amino-acid chain; its full sequence is MDAFIRVANQSQGRDRLFRATQHACMLLRYLLESKAGKEAVVTKLKNLETSVSTGRKWFRLGNVLHAIQATEQSIQATDLVPRLCLTLANLNRVVYYICDTVLWAKSVGLTSGINREKWQMRAARHYYYFLLLSLVRDLYEVLLHMGQVARDRAKREKSSGDPPKYSVANEESEWLQSFLLLLFQSLKRNPPLFLDTVKNFCDILIPLNQLGIYKSNLGVVGFGGLVSSVAGLITVVYPQLKLKAR.

Residues 1 to 93 (MDAFIRVANQ…LCLTLANLNR (93 aa)) lie on the Cytoplasmic side of the membrane. The chain crosses the membrane as a helical span at residues 94 to 114 (VVYYICDTVLWAKSVGLTSGI). The Lumenal portion of the chain corresponds to 115–217 (NREKWQMRAA…LNQLGIYKSN (103 aa)). A helical transmembrane segment spans residues 218–238 (LGVVGFGGLVSSVAGLITVVY). The interval 218–238 (LGVVGFGGLVSSVAGLITVVY) is required for homodimerization, interaction with PEX11G, and peroxisomal localization. At 239–246 (PQLKLKAR) the chain is on the cytoplasmic side.

The protein belongs to the peroxin-11 family. In terms of assembly, homodimer. Heterodimer with PEX11G. Probably interacts with COPB2 and COPA. Interacts with PEX19. Interacts with FIS1. In terms of tissue distribution, expressed at high levels in kidney, liver, lung, brain, and testis and at low levels in heart, spleen and skeletal muscle.

Its subcellular location is the peroxisome membrane. Its function is as follows. May be involved in peroxisomal proliferation and may regulate peroxisomes division. May mediate binding of coatomer proteins to the peroxisomal membrane. Promotes membrane protrusion and elongation on the peroxisomal surface. In Rattus norvegicus (Rat), this protein is Peroxisomal membrane protein 11A (Pex11a).